The primary structure comprises 840 residues: Phosphatidylglycerol lysyltransferase (840 aa).

At 1–8 (MNQEVKNK) the chain is on the cytoplasmic side. Residues 9 to 29 (IFSILKITFATALFIFVVITL) traverse the membrane as a helical segment. The Extracellular portion of the chain corresponds to 30 to 52 (YRELSGINFKDTLVEFSKINRMS). The chain crosses the membrane as a helical span at residues 53–73 (LVLLFIGGGASLVILSMYDVI). Over 74–89 (LSRALKMDISLGKVLR) the chain is Cytoplasmic. A helical membrane pass occupies residues 90–110 (VSYIINALNAIVGFGGFIGAG). The Extracellular segment spans residues 111 to 128 (VRAMVYKNYTHDKKKLVH). Residues 129–149 (FISLILISMLTGLSLLSLLIV) traverse the membrane as a helical segment. Over 150 to 161 (FHVFDASLILNK) the chain is Cytoplasmic. The helical transmembrane segment at 162–182 (ITWVRWVLYAVSLFLPLFIIY) threads the bilayer. At 183 to 200 (SMVRPPDKNNRYVGLYCT) the chain is on the extracellular side. A helical membrane pass occupies residues 201–221 (LVSCVEWLAAAVVLYFCGVIV). Over 222–229 (DVHVSFMS) the chain is Cytoplasmic. Residues 230–250 (FIAIFIIAALSGLVSFIPGGF) form a helical membrane-spanning segment. Residues 251-271 (GAFDLVVLLGFKTLGVPEEKV) lie on the Extracellular side of the membrane. A helical membrane pass occupies residues 272 to 292 (LLMLLLYRFAYYFVPVIIALI). Topologically, residues 293–337 (LSSFEFGTSAKKYIEGSKYFIPAKDVTSFLMSYQKDIIAKIPSLS) are cytoplasmic. A helical transmembrane segment spans residues 338–358 (LAILVFFTSMIFFVNNLTIVY). At 359-369 (DALYDGNHLTY) the chain is on the extracellular side. Residues 370–390 (YLLLAIHTSACLLLLLNVVGI) form a helical membrane-spanning segment. Over 391-394 (YKQS) the chain is Cytoplasmic. The next 2 membrane-spanning stretches (helical) occupy residues 395–415 (RRAI…TLFT) and 416–436 (YASY…IVAF). Topologically, residues 437–450 (RRARRLKRPIRMRN) are cytoplasmic. A helical membrane pass occupies residues 451–471 (LVAMLLFSIFILYINHIFIAG). Over 472–489 (TFYALDVYTIEMHTSVLK) the chain is Extracellular. Residues 490–510 (YYFWITILIIAIIVGAIAWLF) form a helical membrane-spanning segment. The Cytoplasmic portion of the chain corresponds to 511-840 (DYQFSKVRIS…SKVMRVIRHK (330 aa)).

The protein belongs to the LPG synthase family.

Its subcellular location is the cell membrane. It catalyses the reaction L-lysyl-tRNA(Lys) + a 1,2-diacyl-sn-glycero-3-phospho-(1'-sn-glycerol) = a 1,2-diacyl-sn-glycero-3-phospho-1'-(3'-O-L-lysyl)-sn-glycerol + tRNA(Lys). Catalyzes the transfer of a lysyl group from L-lysyl-tRNA(Lys) to membrane-bound phosphatidylglycerol (PG), which produces lysylphosphatidylglycerol (LPG), a major component of the bacterial membrane with a positive net charge. LPG synthesis contributes to bacterial virulence as it is involved in the resistance mechanism against cationic antimicrobial peptides (CAMP) produces by the host's immune system (defensins, cathelicidins) and by the competing microorganisms (bacteriocins). In fact, the modification of anionic phosphatidylglycerol with positively charged L-lysine results in repulsion of the peptides. The protein is Phosphatidylglycerol lysyltransferase (mprF) of Staphylococcus aureus (strain MRSA252).